Reading from the N-terminus, the 367-residue chain is tRNA-dihydrouridine(20a/20b) synthase [NAD(P)+] (367 aa).

FMN-binding positions include Pro45–Val47 and Gln99. Cys128 serves as the catalytic Proton donor. Residues Lys169, His197, Asn231–Asp233, and Val255–Arg256 each bind FMN.

The protein belongs to the Dus family. Dus4 subfamily. It depends on FMN as a cofactor.

The enzyme catalyses 5,6-dihydrouridine(20a) in tRNA + NADP(+) = uridine(20a) in tRNA + NADPH + H(+). It carries out the reaction 5,6-dihydrouridine(20a) in tRNA + NAD(+) = uridine(20a) in tRNA + NADH + H(+). It catalyses the reaction 5,6-dihydrouridine(20b) in tRNA + NAD(+) = uridine(20b) in tRNA + NADH + H(+). The catalysed reaction is 5,6-dihydrouridine(20b) in tRNA + NADP(+) = uridine(20b) in tRNA + NADPH + H(+). The enzyme catalyses a 5,6-dihydrouridine in mRNA + NAD(+) = a uridine in mRNA + NADH + H(+). It carries out the reaction a 5,6-dihydrouridine in mRNA + NADP(+) = a uridine in mRNA + NADPH + H(+). Its function is as follows. Catalyzes the synthesis of dihydrouridine, a modified base found in the D-loop of most tRNAs. Specifically modifies U20a and U20b in cytoplasmic tRNAs. Also able to mediate dihydrouridylation of some mRNAs, thereby affecting their translation. This chain is tRNA-dihydrouridine(20a/20b) synthase [NAD(P)+], found in Saccharomyces cerevisiae (strain ATCC 204508 / S288c) (Baker's yeast).